The primary structure comprises 307 residues: MLVKGNEILLKAHKEGYGVGAFNFVNFEMLNAIFEAGNEENSPLFIQASEGAIKYMGIDMAVGMVKIMCERYPHIPVALHLDHGTTFESCEKAVKAGFTSVMIDASHHAFEENLELTSKVVKMAHNAGVSVEAELGRLMGIEDNISVDEKDAVLVNPKEAERFVKESQVDYLAPAIGTSHGAFKFKGEPKLDFERLQEVKRLTNIPLVLHGASAIPDDVRKSYLDAGGDLKGSKGVPFEFLQESIKGGINKVNTDTDLRIAFIAEVRKVANEDKSQFDLRKFFSPAQLALKNVVKERMKLLGSANKI.

S49 serves as a coordination point for D-glyceraldehyde 3-phosphate. The active-site Proton donor is the D82. Residues H83, D104, E134, and H180 each coordinate Zn(2+). G181 lines the dihydroxyacetone phosphate pocket. H210 contacts Zn(2+). Dihydroxyacetone phosphate is bound by residues 211 to 213 and 253 to 256; these read GAS and NTDT.

Belongs to the class II fructose-bisphosphate aldolase family. Homodimer. Zn(2+) serves as cofactor.

The catalysed reaction is beta-D-fructose 1,6-bisphosphate = D-glyceraldehyde 3-phosphate + dihydroxyacetone phosphate. The protein operates within carbohydrate degradation; glycolysis; D-glyceraldehyde 3-phosphate and glycerone phosphate from D-glucose: step 4/4. Catalyzes the aldol condensation of dihydroxyacetone phosphate (DHAP or glycerone-phosphate) with glyceraldehyde 3-phosphate (G3P) to form fructose 1,6-bisphosphate (FBP) in gluconeogenesis and the reverse reaction in glycolysis. The polypeptide is Fructose-bisphosphate aldolase (fba) (Helicobacter pylori (strain J99 / ATCC 700824) (Campylobacter pylori J99)).